The primary structure comprises 747 residues: Polyribonucleotide nucleotidyltransferase (747 aa).

The Mg(2+) site is built by Asp-487 and Asp-493. One can recognise a KH domain in the interval 554–613 (PSTTTIKIDKDKIRDIIGPGGKVIKEICETSGAKIDISDDGSVSVYASDRDKLKVALDKI). Residues 623 to 691 (GEIFNGTVMK…NKGKAKLTIK (69 aa)) form the S1 motif domain. A disordered region spans residues 691–747 (KNADKDKSSNNPKPKNNVNNAKENSEPERRDSSKKRAWNEDSNNDKEEAITERKYFN). Over residues 699 to 712 (SNNPKPKNNVNNAK) the composition is skewed to low complexity. Residues 727–747 (AWNEDSNNDKEEAITERKYFN) are compositionally biased toward basic and acidic residues.

The protein belongs to the polyribonucleotide nucleotidyltransferase family. Mg(2+) serves as cofactor.

The protein resides in the cytoplasm. It catalyses the reaction RNA(n+1) + phosphate = RNA(n) + a ribonucleoside 5'-diphosphate. Its function is as follows. Involved in mRNA degradation. Catalyzes the phosphorolysis of single-stranded polyribonucleotides processively in the 3'- to 5'-direction. The protein is Polyribonucleotide nucleotidyltransferase of Rickettsia felis (strain ATCC VR-1525 / URRWXCal2) (Rickettsia azadi).